We begin with the raw amino-acid sequence, 318 residues long: Pantothenate kinase (318 aa).

Residue 96-103 coordinates ATP; sequence GSVAVGKS.

The protein belongs to the prokaryotic pantothenate kinase family.

It is found in the cytoplasm. The enzyme catalyses (R)-pantothenate + ATP = (R)-4'-phosphopantothenate + ADP + H(+). It participates in cofactor biosynthesis; coenzyme A biosynthesis; CoA from (R)-pantothenate: step 1/5. This is Pantothenate kinase from Rhodopseudomonas palustris (strain BisA53).